A 515-amino-acid polypeptide reads, in one-letter code: 2-isopropylmalate synthase (515 aa).

In terms of domain architecture, Pyruvate carboxyltransferase spans 5-268 (VIIFDTTLRD…VCGIDATQIV (264 aa)). Residues Asp-14, His-202, His-204, and Asn-239 each contribute to the Mn(2+) site. Residues 394 to 515 (KFISLSQHSE…QAKLNAQMTP (122 aa)) form a regulatory domain region.

It belongs to the alpha-IPM synthase/homocitrate synthase family. LeuA type 1 subfamily. In terms of assembly, homodimer. Mn(2+) is required as a cofactor.

Its subcellular location is the cytoplasm. The enzyme catalyses 3-methyl-2-oxobutanoate + acetyl-CoA + H2O = (2S)-2-isopropylmalate + CoA + H(+). It functions in the pathway amino-acid biosynthesis; L-leucine biosynthesis; L-leucine from 3-methyl-2-oxobutanoate: step 1/4. Catalyzes the condensation of the acetyl group of acetyl-CoA with 3-methyl-2-oxobutanoate (2-ketoisovalerate) to form 3-carboxy-3-hydroxy-4-methylpentanoate (2-isopropylmalate). The polypeptide is 2-isopropylmalate synthase (Polynucleobacter necessarius subsp. necessarius (strain STIR1)).